A 155-amino-acid polypeptide reads, in one-letter code: 6,7-dimethyl-8-ribityllumazine synthase (155 aa).

Residues phenylalanine 24, 58–60, and 82–84 each bind 5-amino-6-(D-ribitylamino)uracil; these read AFE and VII. 87-88 is a binding site for (2S)-2-hydroxy-3-oxobutyl phosphate; the sequence is ST. Histidine 90 serves as the catalytic Proton donor. Phenylalanine 115 serves as a coordination point for 5-amino-6-(D-ribitylamino)uracil. Arginine 129 serves as a coordination point for (2S)-2-hydroxy-3-oxobutyl phosphate.

It belongs to the DMRL synthase family.

It carries out the reaction (2S)-2-hydroxy-3-oxobutyl phosphate + 5-amino-6-(D-ribitylamino)uracil = 6,7-dimethyl-8-(1-D-ribityl)lumazine + phosphate + 2 H2O + H(+). The protein operates within cofactor biosynthesis; riboflavin biosynthesis; riboflavin from 2-hydroxy-3-oxobutyl phosphate and 5-amino-6-(D-ribitylamino)uracil: step 1/2. Its function is as follows. Catalyzes the formation of 6,7-dimethyl-8-ribityllumazine by condensation of 5-amino-6-(D-ribitylamino)uracil with 3,4-dihydroxy-2-butanone 4-phosphate. This is the penultimate step in the biosynthesis of riboflavin. This Chlorobium phaeobacteroides (strain DSM 266 / SMG 266 / 2430) protein is 6,7-dimethyl-8-ribityllumazine synthase.